Consider the following 246-residue polypeptide: Ribonuclease 3 (246 aa).

Positions 16-144 constitute an RNase III domain; that stretch reads LLEFQKQAGL…VIGAYYIDSG (129 aa). Glu-57 serves as a coordination point for Mg(2+). Asp-61 is an active-site residue. Residues Asp-130 and Glu-133 each coordinate Mg(2+). Glu-133 is an active-site residue. Positions 171–240 constitute a DRBM domain; the sequence is DYKSLLQELV…AKVAYENLCS (70 aa).

Belongs to the ribonuclease III family. Homodimer. Mg(2+) serves as cofactor.

The protein localises to the cytoplasm. It carries out the reaction Endonucleolytic cleavage to 5'-phosphomonoester.. Functionally, digests double-stranded RNA. Involved in the processing of primary rRNA transcript to yield the immediate precursors to the large and small rRNAs (23S and 16S). Processes some mRNAs, and tRNAs when they are encoded in the rRNA operon. Processes pre-crRNA and tracrRNA of type II CRISPR loci if present in the organism. The protein is Ribonuclease 3 of Treponema denticola (strain ATCC 35405 / DSM 14222 / CIP 103919 / JCM 8153 / KCTC 15104).